A 1096-amino-acid polypeptide reads, in one-letter code: Phospholipase D zeta 1 (1096 aa).

At alanine 2 the chain carries N-acetylalanine. The region spanning 50-204 (PKAVIVSVSR…REVCRFLEVS (155 aa)) is the PX domain. The interval 131-152 (VQDEDADEVPLHQDESAKNRDV) is disordered. A compositionally biased stretch (basic and acidic residues) spans 139 to 151 (VPLHQDESAKNRD). Residues 234-342 (DDSNRCCGCC…WVASINDAAL (109 aa)) enclose the PH domain. The PLD phosphodiesterase 1 domain occupies 477–504 (YLWSHHEKLVIVDNQVCFIGGLDLCFGR). Active-site residues include histidine 482, lysine 484, and aspartate 489. Over residues 607 to 632 (GRQEESDIESKKEEDSIRGIRRDDSF) the composition is skewed to basic and acidic residues. Residues 607-691 (GRQEESDIES…DGDTPMRGFV (85 aa)) are disordered. The PLD phosphodiesterase 2 domain occupies 892–919 (SQVYVHSKIMIVDDRAALIGSANINDRS). Catalysis depends on residues histidine 897, lysine 899, and aspartate 904.

The protein belongs to the phospholipase D family. PXPH-PLD subfamily. The cofactor is Does not require Ca(2+) or any other cation for activity.. As to expression, expressed in inflorescences, flowers, siliques, stems, leaves, and roots. Highest expression in roots.

The protein resides in the cytoplasmic vesicle. The catalysed reaction is a 1,2-diacyl-sn-glycero-3-phosphocholine + H2O = a 1,2-diacyl-sn-glycero-3-phosphate + choline + H(+). Calcium-independent and PIP2-dependent. Functionally, hydrolyzes glycerol-phospholipids at the terminal phosphodiesteric bond to generate phosphatidic acids (PA). Phosphatidylcholine-selective. Regulates root-hair morphogenesis. Contributes to the supply of inorganic phosphorus for cell metabolism and diacylglycerol moieties for galactolipid synthesis in phosphorus-starved roots. Involved in root elongation during phosphate limitation. The protein is Phospholipase D zeta 1 of Arabidopsis thaliana (Mouse-ear cress).